The primary structure comprises 340 residues: Glyceraldehyde-3-phosphate dehydrogenase (340 aa).

Residues 11-12 (TI) and Gly109 contribute to the NAD(+) site. Position 138-140 (138-140 (SCN)) interacts with D-glyceraldehyde 3-phosphate. Cys139 (nucleophile) is an active-site residue. Residue Arg167 coordinates NAD(+). D-glyceraldehyde 3-phosphate is bound at residue 193–194 (HA). Gln300 contributes to the NAD(+) binding site.

This sequence belongs to the glyceraldehyde-3-phosphate dehydrogenase family. Homotetramer.

The protein resides in the cytoplasm. The catalysed reaction is D-glyceraldehyde 3-phosphate + phosphate + NADP(+) = (2R)-3-phospho-glyceroyl phosphate + NADPH + H(+). It carries out the reaction D-glyceraldehyde 3-phosphate + phosphate + NAD(+) = (2R)-3-phospho-glyceroyl phosphate + NADH + H(+). It participates in carbohydrate degradation; glycolysis; pyruvate from D-glyceraldehyde 3-phosphate: step 1/5. This Saccharolobus islandicus (strain Y.N.15.51 / Yellowstone #2) (Sulfolobus islandicus) protein is Glyceraldehyde-3-phosphate dehydrogenase.